Here is a 464-residue protein sequence, read N- to C-terminus: Protein phosphatase 2C homolog 2 (464 aa).

Positions 23–292 (AFGLCAMQGW…DNMSIVVVAL (270 aa)) constitute a PPM-type phosphatase domain. Mn(2+) contacts are provided by aspartate 62, glycine 63, aspartate 234, and aspartate 283. The tract at residues 174–355 (DGFVEMDRVN…KPQDKFTRDH (182 aa)) is interaction with IRE1. Disordered stretches follow at residues 361 to 398 (SVTAADNDDPMDIDDTDADTDAENLDPSSQSKSKTSGP) and 434 to 464 (QLLQTMGHDPASSHPENDSNTDHKAGRSHLQ). Residues 366–384 (DNDDPMDIDDTDADTDAEN) show a composition bias toward acidic residues. Threonine 376 and threonine 380 each carry phosphothreonine. The span at 386 to 396 (DPSSQSKSKTS) shows a compositional bias: polar residues. A compositionally biased stretch (basic and acidic residues) spans 448–458 (PENDSNTDHKA).

The protein belongs to the PP2C family. As to quaternary structure, interacts with IRE1 (when phosphorylated); the interaction is direct and serves to attenuate the endoplasmic reticulum unfolded protein response. Interacts (when phosphorylated) with RAD53 (via domain FHA 1); the interaction is direct and serves to regulate DNA damage checkpoint signaling. Interacts with the ATG17-ATG29-ATG31 and ATG1-ATG13 supercomplex; to regulate induction of autophagy. Mg(2+) is required as a cofactor. Mn(2+) serves as cofactor.

It localises to the nucleus. Its subcellular location is the cytoplasm. The protein resides in the cytosol. It catalyses the reaction O-phospho-L-seryl-[protein] + H2O = L-seryl-[protein] + phosphate. The catalysed reaction is O-phospho-L-threonyl-[protein] + H2O = L-threonyl-[protein] + phosphate. Functionally, dephosphorylating regulator for many key proteins. Dephosphorylates the cell cycle master regulator CDC28/cyclin-dependent kinase 1; its activity appears redundant with phosphatase PTC3. Dephosphorylates HOG1 at 'Thr-171', to attenuate activation of the stress-activated p38MAPK cascade; its activity appears redundant with phosphatase PTC3. Positively regulates both nonselective macroautophagy as well as the selective cytoplasm-to-vacuole (cvt) autophagy pathway and the genotoxin-induced targeted autophagy (GTA) pathway, possibly by dephosphorylating ATG13 to enable the interaction between the ATG17-ATG29-ATG31 and ATG1-ATG13 complexes; its activity appears redundant with phosphatase PTC3. Dephosphorylates RAD53, to regulate DNA damage checkpoint signaling. Dephosphorylates IRE1, to negatively regulate the endoplasmic reticulum unfolded protein response. This is Protein phosphatase 2C homolog 2 (PTC2) from Saccharomyces cerevisiae (strain ATCC 204508 / S288c) (Baker's yeast).